Reading from the N-terminus, the 112-residue chain is Nucleoid-associated protein FTF0810c (112 aa).

A disordered region spans residues 1–27 (MNFDMSKLMQQAQKMQEQMKKAQQERE). A compositionally biased stretch (basic and acidic residues) spans 17 to 27 (EQMKKAQQERE).

Belongs to the YbaB/EbfC family. As to quaternary structure, homodimer.

The protein localises to the cytoplasm. It is found in the nucleoid. Binds to DNA and alters its conformation. May be involved in regulation of gene expression, nucleoid organization and DNA protection. This is Nucleoid-associated protein FTF0810c from Francisella tularensis subsp. tularensis (strain FSC 198).